The following is a 262-amino-acid chain: tRNA (guanine-N(1)-)-methyltransferase (262 aa).

S-adenosyl-L-methionine is bound by residues glycine 112 and 132–137 (IGDYIL).

Belongs to the RNA methyltransferase TrmD family. Homodimer.

It is found in the cytoplasm. The catalysed reaction is guanosine(37) in tRNA + S-adenosyl-L-methionine = N(1)-methylguanosine(37) in tRNA + S-adenosyl-L-homocysteine + H(+). Specifically methylates guanosine-37 in various tRNAs. This chain is tRNA (guanine-N(1)-)-methyltransferase, found in Desulfatibacillum aliphaticivorans.